A 348-amino-acid polypeptide reads, in one-letter code: Dihydroorotase (348 aa).

2 residues coordinate Zn(2+): His13 and His15. Substrate contacts are provided by residues 15-17 (HLR) and Asn41. The Zn(2+) site is built by Lys99, His136, and His174. Position 99 is an N6-carboxylysine (Lys99). Position 136 (His136) interacts with substrate. Residue Leu219 coordinates substrate. Asp247 serves as a coordination point for Zn(2+). Asp247 is a catalytic residue. The substrate site is built by His251 and Ala263.

Belongs to the metallo-dependent hydrolases superfamily. DHOase family. Class II DHOase subfamily. In terms of assembly, homodimer. Zn(2+) serves as cofactor.

It carries out the reaction (S)-dihydroorotate + H2O = N-carbamoyl-L-aspartate + H(+). Its pathway is pyrimidine metabolism; UMP biosynthesis via de novo pathway; (S)-dihydroorotate from bicarbonate: step 3/3. Catalyzes the reversible cyclization of carbamoyl aspartate to dihydroorotate. This chain is Dihydroorotase, found in Coxiella burnetii (strain RSA 331 / Henzerling II).